The chain runs to 467 residues: DNA repair protein RadA (467 aa).

Residues 10-27 (CQNCGAVHSRWAGKCDSC) form a C4-type zinc finger. 98–105 (GDPGIGKS) provides a ligand contact to ATP. A RadA KNRFG motif motif is present at residues 260–264 (KNRFG). The interval 359 to 467 (DVYLNVAGGY…RIAASGAGKK (109 aa)) is lon-protease-like.

This sequence belongs to the RecA family. RadA subfamily.

In terms of biological role, DNA-dependent ATPase involved in processing of recombination intermediates, plays a role in repairing DNA breaks. Stimulates the branch migration of RecA-mediated strand transfer reactions, allowing the 3' invading strand to extend heteroduplex DNA faster. Binds ssDNA in the presence of ADP but not other nucleotides, has ATPase activity that is stimulated by ssDNA and various branched DNA structures, but inhibited by SSB. Does not have RecA's homology-searching function. This is DNA repair protein RadA from Brucella abortus (strain 2308).